The following is a 227-amino-acid chain: Lipoprotein-releasing system ATP-binding protein LolD (227 aa).

The 223-residue stretch at 5–227 (LICQNITKHY…QDGILRESNS (223 aa)) folds into the ABC transporter domain. 41-48 (GSSGSGKS) is a binding site for ATP.

It belongs to the ABC transporter superfamily. Lipoprotein translocase (TC 3.A.1.125) family. As to quaternary structure, the complex is composed of two ATP-binding proteins (LolD) and two transmembrane proteins (LolC and LolE).

It localises to the cell inner membrane. In terms of biological role, part of the ABC transporter complex LolCDE involved in the translocation of mature outer membrane-directed lipoproteins, from the inner membrane to the periplasmic chaperone, LolA. Responsible for the formation of the LolA-lipoprotein complex in an ATP-dependent manner. The sequence is that of Lipoprotein-releasing system ATP-binding protein LolD from Histophilus somni (strain 129Pt) (Haemophilus somnus).